The chain runs to 239 residues: Ribosome assembly factor mrt4 (239 aa).

It belongs to the universal ribosomal protein uL10 family. As to quaternary structure, associates with the pre-60S ribosomal particle.

It localises to the nucleus. Its subcellular location is the nucleolus. The protein resides in the cytoplasm. Its function is as follows. Component of the ribosome assembly machinery. Nuclear paralog of the ribosomal protein P0, it binds pre-60S subunits at an early stage of assembly in the nucleolus, and is replaced by P0 in cytoplasmic pre-60S subunits and mature 80S ribosomes. The sequence is that of Ribosome assembly factor mrt4 from Candida glabrata (strain ATCC 2001 / BCRC 20586 / JCM 3761 / NBRC 0622 / NRRL Y-65 / CBS 138) (Yeast).